Here is a 133-residue protein sequence, read N- to C-terminus: Small ribosomal subunit protein uS8 (133 aa).

Belongs to the universal ribosomal protein uS8 family. As to quaternary structure, part of the 30S ribosomal subunit. Contacts proteins S5 and S12.

One of the primary rRNA binding proteins, it binds directly to 16S rRNA central domain where it helps coordinate assembly of the platform of the 30S subunit. This chain is Small ribosomal subunit protein uS8, found in Oenococcus oeni (strain ATCC BAA-331 / PSU-1).